Here is a 993-residue protein sequence, read N- to C-terminus: Protein translocase subunit SecA (993 aa).

ATP contacts are provided by residues Gln102, 120–124, and Asp523; that span reads GEGKT. Positions 910–962 are disordered; sequence ENAPEPQISGGNGQQPPQRRQQTSLDDLEKQFERKKKRELEQARMAGGGMPDA. Over residues 936 to 951 the composition is skewed to basic and acidic residues; that stretch reads DLEKQFERKKKRELEQ. Zn(2+) is bound by residues Cys979, Cys981, Cys990, and His991.

The protein belongs to the SecA family. In terms of assembly, monomer and homodimer. Part of the essential Sec protein translocation apparatus which comprises SecA, SecYEG and auxiliary proteins SecDF. Other proteins may also be involved. The cofactor is Zn(2+).

Its subcellular location is the cell inner membrane. The protein resides in the cytoplasm. It carries out the reaction ATP + H2O + cellular proteinSide 1 = ADP + phosphate + cellular proteinSide 2.. Functionally, part of the Sec protein translocase complex. Interacts with the SecYEG preprotein conducting channel. Has a central role in coupling the hydrolysis of ATP to the transfer of proteins into and across the cell membrane, serving as an ATP-driven molecular motor driving the stepwise translocation of polypeptide chains across the membrane. The sequence is that of Protein translocase subunit SecA from Koribacter versatilis (strain Ellin345).